A 330-amino-acid polypeptide reads, in one-letter code: tRNA pseudouridine synthase B (330 aa).

Residue aspartate 42 is the Nucleophile of the active site.

The protein belongs to the pseudouridine synthase TruB family. Type 1 subfamily.

It catalyses the reaction uridine(55) in tRNA = pseudouridine(55) in tRNA. In terms of biological role, responsible for synthesis of pseudouridine from uracil-55 in the psi GC loop of transfer RNAs. The sequence is that of tRNA pseudouridine synthase B from Lactococcus lactis subsp. cremoris (strain SK11).